The primary structure comprises 188 residues: Protein SSX4 (188 aa).

Positions 20 to 83 (KLRKAFDDIA…KRAADFHGND (64 aa)) constitute a KRAB-related domain. Basic and acidic residues predominate over residues 116 to 127 (PAEEENGLKEVP). The segment at 116-167 (PAEEENGLKEVPEASGPQNDGKQLCPPGNPSTLEKINKTSGPKRGKHAWTHR) is disordered. Residues 145 to 155 (PSTLEKINKTS) are compositionally biased toward polar residues. Positions 156–167 (GPKRGKHAWTHR) are enriched in basic residues.

Belongs to the SSX family.

In terms of biological role, could act as a modulator of transcription. In Homo sapiens (Human), this protein is Protein SSX4 (SSX4).